The following is a 153-amino-acid chain: Small ribosomal subunit protein uS19 (153 aa).

The unknown stretch occupies residues 1–63; it reads MGFRGAWNKR…QEIWDEFRAF (63 aa). The tract at residues 64-153 is small ribosomal subunit protein uS19; the sequence is VNKKAWVDPK…EKSAKVVKKK (90 aa).

It belongs to the universal ribosomal protein uS19 family.

Its function is as follows. Protein S19 forms a complex with S13 that binds strongly to the 16S ribosomal RNA. The sequence is that of Small ribosomal subunit protein uS19 from Hydrogenobaculum sp. (strain Y04AAS1).